The primary structure comprises 250 residues: Triosephosphate isomerase (250 aa).

Residue 9 to 11 coordinates substrate; sequence NWK. His95 serves as the catalytic Electrophile. The Proton acceptor role is filled by Glu167. Residues Gly173, Ser212, and 233-234 each bind substrate; that span reads GG.

Belongs to the triosephosphate isomerase family. Homodimer.

The protein localises to the cytoplasm. The catalysed reaction is D-glyceraldehyde 3-phosphate = dihydroxyacetone phosphate. Its pathway is carbohydrate biosynthesis; gluconeogenesis. It participates in carbohydrate degradation; glycolysis; D-glyceraldehyde 3-phosphate from glycerone phosphate: step 1/1. Its function is as follows. Involved in the gluconeogenesis. Catalyzes stereospecifically the conversion of dihydroxyacetone phosphate (DHAP) to D-glyceraldehyde-3-phosphate (G3P). The polypeptide is Triosephosphate isomerase (Psychromonas ingrahamii (strain DSM 17664 / CCUG 51855 / 37)).